A 30-amino-acid chain; its full sequence is Putative alpha-amylase inhibitor (30 aa).

It belongs to the leguminous lectin family.

Lectin and alpha-amylase inhibitor. Acts as a defensive protein against insects. The protein is Putative alpha-amylase inhibitor of Phaseolus vulgaris (Kidney bean).